The following is a 415-amino-acid chain: Serine hydroxymethyltransferase (415 aa).

Residues leucine 119 and 123-125 (GHL) contribute to the (6S)-5,6,7,8-tetrahydrofolate site. An N6-(pyridoxal phosphate)lysine modification is found at lysine 228. 353–355 (SAF) contacts (6S)-5,6,7,8-tetrahydrofolate.

Belongs to the SHMT family. In terms of assembly, homodimer. It depends on pyridoxal 5'-phosphate as a cofactor.

It localises to the cytoplasm. It catalyses the reaction (6R)-5,10-methylene-5,6,7,8-tetrahydrofolate + glycine + H2O = (6S)-5,6,7,8-tetrahydrofolate + L-serine. The protein operates within one-carbon metabolism; tetrahydrofolate interconversion. It functions in the pathway amino-acid biosynthesis; glycine biosynthesis; glycine from L-serine: step 1/1. In terms of biological role, catalyzes the reversible interconversion of serine and glycine with tetrahydrofolate (THF) serving as the one-carbon carrier. Also exhibits THF-independent aldolase activity toward beta-hydroxyamino acids, producing glycine and aldehydes, via a retro-aldol mechanism. The polypeptide is Serine hydroxymethyltransferase (Halobacterium salinarum (strain ATCC 29341 / DSM 671 / R1)).